Reading from the N-terminus, the 181-residue chain is Large ribosomal subunit protein uL22 (181 aa).

The segment at 157–181 is disordered; that stretch reads PEAAKKPGKKTSAVEKSKKATAATH.

The protein belongs to the universal ribosomal protein uL22 family.

This is Large ribosomal subunit protein uL22 (RpL17) from Biphyllus lunatus (Beetle).